A 108-amino-acid polypeptide reads, in one-letter code: Ig kappa chain V region GOM (108 aa).

A framework-1 region spans residues 1–23; sequence DIVMTQTPLSLSVSPGEPASISC. Cys-23 and Cys-88 are disulfide-bonded. Positions 24 to 34 are complementarity-determining-1; the sequence is RSSQSNLDYLN. The interval 35–49 is framework-2; that stretch reads WYLQKAGQSPRLLPE. The disordered stretch occupies residues 44-66; that stretch reads PRLLPEQDSQRASGVPDRFSGSG. A complementarity-determining-2 region spans residues 50–56; the sequence is QDSQRAS. The segment at 57–88 is framework-3; it reads GVPDRFSGSGSGTDFTLRIGRVEAEDAGIYYC. The tract at residues 89–97 is complementarity-determining-3; it reads MQRSFYPYT. The segment at 98-107 is framework-4; the sequence is FGQGTRLEVR.

In Canis lupus familiaris (Dog), this protein is Ig kappa chain V region GOM.